The chain runs to 486 residues: NADH dehydrogenase [ubiquinone] flavoprotein 1, mitochondrial (486 aa).

The N-terminal 30 residues, 1–30 (MAPVRGILGLQRAVSIWKESNRLTPALRSF), are a transit peptide targeting the mitochondrion. Over residues 31–40 (STQAASTSTT) the composition is skewed to low complexity. The interval 31–57 (STQAASTSTTPQPPPPPPPPEKTHFGG) is disordered. Over residues 41–50 (PQPPPPPPPP) the composition is skewed to pro residues. NADH is bound at residue 110 to 119 (GRGGAGFPSG). Position 222-270 (222-270 (FGAGAYICGEETALLESLEGKQGKPRLKPPFPANAGLYGCPTTVTNVET)) interacts with FMN. The [4Fe-4S] cluster site is built by cysteine 402, cysteine 405, cysteine 408, and cysteine 448.

Belongs to the complex I 51 kDa subunit family. As to quaternary structure, complex I is composed of at least 49 different subunits. This is a component of the flavoprotein-sulfur (FP) fragment of the enzyme. The cofactor is FMN. Requires [4Fe-4S] cluster as cofactor.

It localises to the mitochondrion inner membrane. It carries out the reaction a ubiquinone + NADH + 5 H(+)(in) = a ubiquinol + NAD(+) + 4 H(+)(out). In terms of biological role, core subunit of the mitochondrial membrane respiratory chain NADH dehydrogenase (Complex I) that is believed to belong to the minimal assembly required for catalysis. Complex I functions in the transfer of electrons from NADH to the respiratory chain. The immediate electron acceptor for the enzyme is believed to be ubiquinone. In Arabidopsis thaliana (Mouse-ear cress), this protein is NADH dehydrogenase [ubiquinone] flavoprotein 1, mitochondrial.